The following is a 153-amino-acid chain: Calmodulin-like protein 3 (153 aa).

EF-hand domains follow at residues 1 to 36 (MDQAELARIFQMFDRNGDGKITKQELNDSLENLGIY), 37 to 72 (IPDKDLVQMIEKIDLNGDGYVDIEEFGGLYQTIMEE), 74 to 109 (DEEEDMREAFNVFDQNRDGFITVEELRSVLASLGLK), and 112 to 147 (RTLEDCKRMISKVDVDGDGMVNFKEFKQMMKGGGFA). Ca(2+)-binding residues include Asp14, Asn16, Asp18, Lys20, Glu25, Asp50, Asn52, Asp54, Tyr56, Glu61, Asp87, Asn89, Asp91, Glu98, Asp125, Asp127, Asp129, Met131, and Glu136.

Belongs to the calmodulin family.

Potential calcium sensor. This Arabidopsis thaliana (Mouse-ear cress) protein is Calmodulin-like protein 3 (CML3).